Consider the following 393-residue polypeptide: Proteasome-activating nucleotidase (393 aa).

The stretch at 14–53 forms a coiled coil; the sequence is SDEVQLVRLLEEKIKSLQIEIENLRKELNYYKAEMEKMLS. ATP is bound by residues 178–183 and Tyr317; that span reads GTGKTM. Residues 391-393 are docks into pockets in the proteasome alpha-ring to cause gate opening; sequence KYS.

This sequence belongs to the AAA ATPase family. Homohexamer. The hexameric complex has a two-ring architecture resembling a top hat that caps the 20S proteasome core at one or both ends. Upon ATP-binding, the C-terminus of PAN interacts with the alpha-rings of the proteasome core by binding to the intersubunit pockets.

The protein resides in the cytoplasm. In terms of biological role, ATPase which is responsible for recognizing, binding, unfolding and translocation of substrate proteins into the archaeal 20S proteasome core particle. Is essential for opening the gate of the 20S proteasome via an interaction with its C-terminus, thereby allowing substrate entry and access to the site of proteolysis. Thus, the C-termini of the proteasomal ATPase function like a 'key in a lock' to induce gate opening and therefore regulate proteolysis. Unfolding activity requires energy from ATP hydrolysis, whereas ATP binding alone promotes ATPase-20S proteasome association which triggers gate opening, and supports translocation of unfolded substrates. This chain is Proteasome-activating nucleotidase, found in Saccharolobus islandicus (strain Y.N.15.51 / Yellowstone #2) (Sulfolobus islandicus).